A 417-amino-acid polypeptide reads, in one-letter code: Pre-mRNA-splicing factor RBM22 (417 aa).

The C3H1-type zinc-finger motif lies at 159 to 186 (RNRPHICSFWVKGECKRGEECPYRHEKP). The RRM domain maps to 232-305 (TTLYVGGLGD…RRLNVKWGRS (74 aa)). 2 disordered regions span residues 303 to 348 (GRSQ…SANY) and 369 to 417 (GLSG…PSSG). Over residues 309 to 318 (RGKEREHDGS) the composition is skewed to basic and acidic residues. Residues 369-391 (GLSGPPPGFGPHMFPPMAPPPFL) are compositionally biased toward pro residues.

The protein belongs to the SLT11 family. As to quaternary structure, component of the pre-catalytic and catalytic spliceosome complexes. Component of the postcatalytic spliceosome P complex.

Its subcellular location is the nucleus. The protein resides in the cytoplasm. Required for pre-mRNA splicing as component of the activated spliceosome. Involved in the first step of pre-mRNA splicing. Binds directly to the internal stem-loop (ISL) domain of the U6 snRNA and to the pre-mRNA intron near the 5' splice site during the activation and catalytic phases of the spliceosome cycle. The protein is Pre-mRNA-splicing factor RBM22 (rbm22) of Xenopus laevis (African clawed frog).